The chain runs to 443 residues: Exodeoxyribonuclease 7 large subunit (443 aa).

It belongs to the XseA family. As to quaternary structure, heterooligomer composed of large and small subunits.

The protein resides in the cytoplasm. The catalysed reaction is Exonucleolytic cleavage in either 5'- to 3'- or 3'- to 5'-direction to yield nucleoside 5'-phosphates.. Its function is as follows. Bidirectionally degrades single-stranded DNA into large acid-insoluble oligonucleotides, which are then degraded further into small acid-soluble oligonucleotides. The protein is Exodeoxyribonuclease 7 large subunit of Legionella pneumophila (strain Corby).